The chain runs to 281 residues: NADPH-dependent 7-cyano-7-deazaguanine reductase (281 aa).

Position 88-90 (88-90) interacts with substrate; the sequence is VES. 90-91 is a binding site for NADPH; sequence SK. Residue Cys189 is the Thioimide intermediate of the active site. The active-site Proton donor is the Asp196. 228-229 serves as a coordination point for substrate; that stretch reads HE. Residue 257–258 participates in NADPH binding; it reads RG.

It belongs to the GTP cyclohydrolase I family. QueF type 2 subfamily. In terms of assembly, homodimer.

Its subcellular location is the cytoplasm. The catalysed reaction is 7-aminomethyl-7-carbaguanine + 2 NADP(+) = 7-cyano-7-deazaguanine + 2 NADPH + 3 H(+). The protein operates within tRNA modification; tRNA-queuosine biosynthesis. In terms of biological role, catalyzes the NADPH-dependent reduction of 7-cyano-7-deazaguanine (preQ0) to 7-aminomethyl-7-deazaguanine (preQ1). The protein is NADPH-dependent 7-cyano-7-deazaguanine reductase of Cronobacter sakazakii (strain ATCC BAA-894) (Enterobacter sakazakii).